We begin with the raw amino-acid sequence, 406 residues long: 1-deoxy-D-xylulose 5-phosphate reductoisomerase (406 aa).

NADPH is bound by residues Thr-21, Gly-22, Ser-23, Ile-24, Gly-47, Gln-50, and Asn-127. Lys-128 is a binding site for 1-deoxy-D-xylulose 5-phosphate. Glu-129 contacts NADPH. Asp-151 serves as a coordination point for Mn(2+). Ser-152, Glu-153, Ser-177, and His-200 together coordinate 1-deoxy-D-xylulose 5-phosphate. A Mn(2+)-binding site is contributed by Glu-153. Gly-206 is a binding site for NADPH. Positions 213, 218, 219, and 222 each coordinate 1-deoxy-D-xylulose 5-phosphate. Residue Glu-222 coordinates Mn(2+).

This sequence belongs to the DXR family. It depends on Mg(2+) as a cofactor. Mn(2+) serves as cofactor.

The catalysed reaction is 2-C-methyl-D-erythritol 4-phosphate + NADP(+) = 1-deoxy-D-xylulose 5-phosphate + NADPH + H(+). It participates in isoprenoid biosynthesis; isopentenyl diphosphate biosynthesis via DXP pathway; isopentenyl diphosphate from 1-deoxy-D-xylulose 5-phosphate: step 1/6. Functionally, catalyzes the NADPH-dependent rearrangement and reduction of 1-deoxy-D-xylulose-5-phosphate (DXP) to 2-C-methyl-D-erythritol 4-phosphate (MEP). In Mycobacterium leprae (strain Br4923), this protein is 1-deoxy-D-xylulose 5-phosphate reductoisomerase.